We begin with the raw amino-acid sequence, 325 residues long: Putative carboxypeptidase YocD (325 aa).

The Nucleophile role is filled by S111. Residues E228 and H296 each act as charge relay system in the active site.

Belongs to the peptidase S66 family.

The protein is Putative carboxypeptidase YocD (yocD) of Bacillus subtilis (strain 168).